A 129-amino-acid polypeptide reads, in one-letter code: Small ribosomal subunit protein uS11 (129 aa).

The protein belongs to the universal ribosomal protein uS11 family. As to quaternary structure, part of the 30S ribosomal subunit. Interacts with proteins S7 and S18. Binds to IF-3.

Its function is as follows. Located on the platform of the 30S subunit, it bridges several disparate RNA helices of the 16S rRNA. Forms part of the Shine-Dalgarno cleft in the 70S ribosome. The protein is Small ribosomal subunit protein uS11 of Salmonella typhi.